Reading from the N-terminus, the 325-residue chain is Protein UL76 (325 aa).

Residues 222–286 are disordered; that stretch reads ARASAVAGGR…VRGGGAVEPA (65 aa). Positions 247 to 258 are enriched in low complexity; that stretch reads GPGAQTVSASGA.

It belongs to the herpesviridae UL24 family.

The protein localises to the virion. Its subcellular location is the host cytoplasm. It is found in the host nucleus. The protein resides in the host nucleolus. It localises to the host Golgi apparatus. Functionally, may participate in nuclear egress of viral particles. Plays a role in the dispersal of several host nucleolar proteins including NCL/nucleolin and NPM1. Since deletion of host NCL/nucleolin negatively impact on nuclear egress, UL76 supposedly acts on this process through its effect on host nucleoli. Induces cell cycle arrest in host cells at the G2/M phase following by apoptosis. The mechanism involves the inhibition of host mitotic complex cyclinB/CDK1. The polypeptide is Protein UL76 (UL76) (Human cytomegalovirus (strain Merlin) (HHV-5)).